The following is a 217-amino-acid chain: MRLRKKWWARPEIEASDKFADEPKELRGKWNKKFNNNNDIHLELGCGRGGFISQLVEKNKDINYVGIDLKDEVIVYAIRKVKEKEEEVKREFKNIKFITMNIMGIAEVFDKNEISKIYINFCNPWPKERHNKRRLTHTKLLTEYKKFIKPNTEIWFKTDDKELFEDSQEYFKESGFNIEYITYDLHNSDFKENIKTEYETKFETMGMKIMFLKARLL.

S-adenosyl-L-methionine is bound by residues Glu-43, Asp-68, Asn-101, and Asn-123. Substrate is bound at residue Lys-127. Residues 129–134 form an interaction with RNA region; that stretch reads RHNKRR. Substrate is bound by residues Asp-159 and 196-199; that span reads TEYE.

The protein belongs to the class I-like SAM-binding methyltransferase superfamily. TrmB family.

It carries out the reaction guanosine(46) in tRNA + S-adenosyl-L-methionine = N(7)-methylguanosine(46) in tRNA + S-adenosyl-L-homocysteine. It functions in the pathway tRNA modification; N(7)-methylguanine-tRNA biosynthesis. Its function is as follows. Catalyzes the formation of N(7)-methylguanine at position 46 (m7G46) in tRNA. In Clostridium botulinum (strain 657 / Type Ba4), this protein is tRNA (guanine-N(7)-)-methyltransferase.